The chain runs to 582 residues: BTB/POZ domain and ankyrin repeat-containing protein NPR1 (582 aa).

Positions 1-18 are enriched in polar residues; the sequence is MEPPTSHVTNAFSDSDSA. Residues 1 to 25 are disordered; the sequence is MEPPTSHVTNAFSDSDSASVEEGGA. The 86-residue stretch at 55–140 folds into the BTB domain; that stretch reads ADARIAVPGG…VLDYLYSGRV (86 aa). The C2HC NPR-type zinc-finger motif lies at 147 to 161; that stretch reads ACLCVDEDCAHVGCH. Residues cysteine 150, cysteine 155, histidine 157, and cysteine 160 each contribute to the Zn(2+) site. 4 ANK repeats span residues 229-258, 269-299, 301-328, and 332-361; these read RSNL…SLGL, KHVR…NLDD, FALH…DVNH, and RGYT…RPAD. Positions 391–526 are salicylic acid-binding core (SBC); that stretch reads PSPKDRLCIE…VLDKIMDDET (136 aa). Arginine 436 is a binding site for salicylate. The tract at residues 551–582 is disordered; that stretch reads QKAFHEDKEENDRSGLSSSSSSTSIGAIRPRR. A compositionally biased stretch (basic and acidic residues) spans 553 to 563; the sequence is AFHEDKEENDR. The segment covering 564–574 has biased composition (low complexity); it reads SGLSSSSSSTS.

The protein belongs to the plant 'ANKYRIN-BTB/POZ' family. 'NPR1-like' subfamily. In terms of assembly, oligomer in an uninduced state; disulfide-linked. Forms activated monomer upon changes in cellular redox potential. Interacts with TGA2.1, TGA2.2, TGA2.3, LG2, TGAL1 and TGAL4. Interacts with NRR, RH1, RH2 and RH3.

Its subcellular location is the cytoplasm. The protein resides in the nucleus. It is found in the nuclear body. Its pathway is protein modification; protein ubiquitination. In terms of biological role, salicylic acid (SA)-binding substrate-specific adapter of an E3 ubiquitin-protein ligase complex (CUL3-RBX1-BTB) which mediates the ubiquitination and subsequent proteasomal degradation of target proteins. Transcription cofactor that represses gene expression in the absence of salicylic acid (SA), when attached to negative cis-elements (W-box) with WRKY transcription factors, but stimulates gene expression upon activation by SA, when sumoylated and attached to positive cis-elements (as-1) with TGA transcription factors, thus confering immunity through a series of gene regulations ending in a significant increase in antimicrobial and defense genes expression. Key positive factor of disease resistance. Plays an essential role in benzothiadiazole (BTH)-induced resistance to the blast fungus disease caused by Magnaporthe oryzae. Involved in defense response against the bacterial blight disease caused by Xanthomonas oryzae pv. oryzae (Xoo). Over-expression of NPR1/NH1 confers disease resistance to Xoo, but also enhances herbivore susceptibility. Functions as a transcriptional coactivator of TGA2.1 and LG2 in vitro. Involved in defense response against herbivore. Plants silencing NPR1/NH1 have increased herbivore-induced trypsin proteinase inhibitors and volatiles, which reduces the performance of the striped stem borer (SSB) Chilo suppressalis. In Oryza sativa subsp. japonica (Rice), this protein is BTB/POZ domain and ankyrin repeat-containing protein NPR1.